The sequence spans 259 residues: Peroxiredoxin-4 (259 aa).

The Thioredoxin domain occupies 66-224 (IRIRKPAPAF…AIRTLKALKF (159 aa)). C111 functions as the Cysteine sulfenic acid (-SOH) intermediate in the catalytic mechanism.

It belongs to the peroxiredoxin family. AhpC/Prx1 subfamily. As to quaternary structure, homodimer; disulfide-linked, upon oxidation. 5 homodimers assemble to form a ring-like decamer.

The protein resides in the cytoplasm. The protein localises to the endoplasmic reticulum. It catalyses the reaction a hydroperoxide + [thioredoxin]-dithiol = an alcohol + [thioredoxin]-disulfide + H2O. Thiol-specific peroxidase that catalyzes the reduction of hydrogen peroxide and organic hydroperoxides to water and alcohols, respectively. Plays a role in cell protection against oxidative stress by detoxifying peroxides and as sensor of hydrogen peroxide-mediated signaling events. Regulates the activation of NF-kappa-B in the cytosol by a modulation of I-kappa-B-alpha phosphorylation. The protein is Peroxiredoxin-4 (prdx4) of Dictyostelium discoideum (Social amoeba).